Consider the following 361-residue polypeptide: dTDP-glucose 4,6-dehydratase 1 (361 aa).

Residues phenylalanine 11 to isoleucine 12, aspartate 32 to threonine 35, aspartate 58 to isoleucine 59, leucine 80 to serine 84, and threonine 99 each bind NAD(+). Serine 84 contributes to the substrate binding site. Threonine 133 provides a ligand contact to substrate. The active-site Proton donor is aspartate 134. Catalysis depends on proton acceptor residues glutamate 135 and tyrosine 167. Position 167–171 (tyrosine 167–lysine 171) interacts with NAD(+). Asparagine 196 provides a ligand contact to substrate. Residue asparagine 197 coordinates NAD(+). Residues lysine 206–leucine 207, proline 222–tyrosine 224, arginine 231, asparagine 266, and aspartate 296–histidine 300 each bind substrate.

The protein belongs to the NAD(P)-dependent epimerase/dehydratase family. dTDP-glucose dehydratase subfamily. Homodimer. NAD(+) serves as cofactor.

The enzyme catalyses dTDP-alpha-D-glucose = dTDP-4-dehydro-6-deoxy-alpha-D-glucose + H2O. The protein operates within carbohydrate biosynthesis; dTDP-L-rhamnose biosynthesis. Its pathway is bacterial outer membrane biogenesis; LPS O-antigen biosynthesis. In terms of biological role, catalyzes the dehydration of dTDP-D-glucose to form dTDP-6-deoxy-D-xylo-4-hexulose via a three-step process involving oxidation, dehydration and reduction. This chain is dTDP-glucose 4,6-dehydratase 1 (rfbB), found in Escherichia coli (strain K12).